Reading from the N-terminus, the 199-residue chain is Interleukin-11 (199 aa).

Positions 1-21 (MNCVCRLVLVVLSLWPDTAVA) are cleaved as a signal peptide. Residues 182–190 (HLTLDWAVR) form an important for interaction with IL11RA and for the stimulation of cell proliferation region.

This sequence belongs to the IL-6 superfamily. As to quaternary structure, interacts with IL11RA to associate with IL6ST, giving rise to a multimeric signaling complex.

Its subcellular location is the secreted. Functionally, cytokine that stimulates the proliferation of hematopoietic stem cells and megakaryocyte progenitor cells and induces megakaryocyte maturation resulting in increased platelet production. Also promotes the proliferation of hepatocytes in response to liver damage. Binding to its receptor formed by IL6ST and IL11RA activates a signaling cascade that promotes cell proliferation. Signaling leads to the activation of intracellular protein kinases and the phosphorylation of STAT3. The interaction with the membrane-bound IL11RA and IL6ST stimulates 'classic signaling', whereas the binding of IL11 and soluble IL11RA to IL6ST stimulates 'trans-signaling'. The sequence is that of Interleukin-11 from Homo sapiens (Human).